Here is a 97-residue protein sequence, read N- to C-terminus: uncharacterized protein (97 aa).

This is an uncharacterized protein from Caenorhabditis elegans.